The chain runs to 814 residues: Kexin (814 aa).

The signal sequence occupies residues Met1 to Ala19. Residues Leu20–Arg109 constitute a propeptide that is removed on maturation. Residue Asn42 is glycosylated (N-linked (GlcNAc...) asparagine). Positions Leu110–Pro113 are cleaved as a propeptide — removed by dipeptidylpeptidase STE13. Residues Ala114–His678 lie on the Lumenal side of the membrane. Ca(2+) is bound at residue Asp135. Positions Gln141–Ile453 constitute a Peptidase S8 domain. Asn163 carries N-linked (GlcNAc...) asparagine glycosylation. The active-site Charge relay system is the Asp175. Asp184 contributes to the Ca(2+) binding site. The active-site Charge relay system is the His213. Asn227, Asp277, Asp320, and Glu350 together coordinate Ca(2+). Cystine bridges form between Cys230–Cys377 and Cys322–Cys352. Ser385 serves as the catalytic Charge relay system. Asn404 and Asn480 each carry an N-linked (GlcNAc...) asparagine glycan. Residues Val462–Asp596 form the P/Homo B domain. The disordered stretch occupies residues Pro651–Ser671. The span at Thr653–Pro667 shows a compositional bias: low complexity. Residues Tyr679–Met699 form a helical membrane-spanning segment. Residues Lys700–Ser814 lie on the Cytoplasmic side of the membrane. The tract at residues Ser756–Ser814 is disordered. The span at Asn792–Gln801 shows a compositional bias: polar residues.

The protein belongs to the peptidase S8 family. Furin subfamily. The cofactor is Ca(2+). In terms of processing, O-glycosylated.

It localises to the golgi apparatus. Its subcellular location is the trans-Golgi network membrane. It carries out the reaction Cleavage of -Lys-Arg-|-Xaa- and -Arg-Arg-|-Xaa- bonds to process yeast alpha-factor pheromone and killer toxin precursors.. In terms of biological role, processing of precursors of alpha-factors and killer toxin. This Saccharomyces cerevisiae (strain ATCC 204508 / S288c) (Baker's yeast) protein is Kexin (KEX2).